The following is a 519-amino-acid chain: Cytosol aminopeptidase (519 aa).

Phosphoserine is present on serine 42. Residue lysine 45 is modified to N6-succinyllysine. Serine 54 is subject to Phosphoserine. N6-succinyllysine is present on residues lysine 61 and lysine 103. Phosphoserine is present on residues serine 180 and serine 194. Residues leucine 202 and methionine 203 each contribute to the Zn(2+) site. Lysine 221 is subject to N6-acetyllysine; alternate. Lysine 221 carries the post-translational modification N6-succinyllysine; alternate. Serine 238 is modified (phosphoserine). Residues lysine 282 and aspartate 287 each coordinate Zn(2+). Residues lysine 282, aspartate 287, serine 292, and lysine 294 each coordinate substrate. Residue aspartate 287 coordinates Mg(2+). Lysine 294 is an active-site residue. 4 residues coordinate Zn(2+): arginine 303, aspartate 305, aspartate 364, and glutamate 366. The substrate site is built by aspartate 305 and aspartate 364. Positions 364 and 366 each coordinate Mg(2+). Arginine 368 is an active-site residue. Lysine 455 bears the N6-acetyllysine; alternate mark. Lysine 455 carries the N6-succinyllysine; alternate modification. Lysine 476 is modified (N6-succinyllysine). The residue at position 489 (lysine 489) is an N6-acetyllysine; alternate. The residue at position 489 (lysine 489) is an N6-succinyllysine; alternate.

Belongs to the peptidase M17 family. In terms of assembly, homohexamer. Zn(2+) serves as cofactor. Requires Mn(2+) as cofactor.

Its subcellular location is the cytoplasm. It catalyses the reaction Release of an N-terminal amino acid, Xaa-|-Yaa-, in which Xaa is preferably Leu, but may be other amino acids including Pro although not Arg or Lys, and Yaa may be Pro. Amino acid amides and methyl esters are also readily hydrolyzed, but rates on arylamides are exceedingly low.. It carries out the reaction an S-substituted L-cysteinylglycine + H2O = an S-substituted L-cysteine + glycine. The catalysed reaction is L-cysteinylglycine + H2O = L-cysteine + glycine. The enzyme catalyses S-benzyl-L-cysteinylglycine + H2O = S-benzyl-L-cysteine + glycine. It catalyses the reaction Release of N-terminal proline from a peptide.. Its activity is regulated as follows. Bimane-S-cysteinylglycine-hydrolyzing activity is inhibited by o-phenanthroline or bestatin, and is activated by the addition of zinc chloride. Functionally, cytosolic metallopeptidase that catalyzes the removal of unsubstituted N-terminal hydrophobic amino acids from various peptides. The presence of Zn(2+) ions is essential for the peptidase activity, and the association with other cofactors can modulate the substrate spectificity of the enzyme. For instance, in the presence of Mn(2+), it displays a specific Cys-Gly hydrolyzing activity of Cys-Gly-S-conjugates. Involved in the metabolism of glutathione and in the degradation of glutathione S-conjugates, which may play a role in the control of the cell redox status. In Rattus norvegicus (Rat), this protein is Cytosol aminopeptidase.